The following is a 45-amino-acid chain: Unknown protein from spots 23/28/205 of 2D-PAGE of thylakoid (45 aa).

It is found in the plastid. Its subcellular location is the chloroplast thylakoid. This Pisum sativum (Garden pea) protein is Unknown protein from spots 23/28/205 of 2D-PAGE of thylakoid.